The primary structure comprises 449 residues: tRNA-2-methylthio-N(6)-dimethylallyladenosine synthase (449 aa).

Positions 4–119 constitute an MTTase N-terminal domain; that stretch reads RTFHIETFGC…APQALDRLVE (116 aa). [4Fe-4S] cluster contacts are provided by cysteine 13, cysteine 48, cysteine 82, cysteine 158, cysteine 162, and cysteine 165. One can recognise a Radical SAM core domain in the interval 144–375; it reads GAVPASVFVN…QTLQNRLTER (232 aa). The region spanning 378–446 is the TRAM domain; sequence QDMVGKKVEV…KHSLLAEQAG (69 aa).

The protein belongs to the methylthiotransferase family. MiaB subfamily. Monomer. [4Fe-4S] cluster is required as a cofactor.

It is found in the cytoplasm. The enzyme catalyses N(6)-dimethylallyladenosine(37) in tRNA + (sulfur carrier)-SH + AH2 + 2 S-adenosyl-L-methionine = 2-methylsulfanyl-N(6)-dimethylallyladenosine(37) in tRNA + (sulfur carrier)-H + 5'-deoxyadenosine + L-methionine + A + S-adenosyl-L-homocysteine + 2 H(+). Functionally, catalyzes the methylthiolation of N6-(dimethylallyl)adenosine (i(6)A), leading to the formation of 2-methylthio-N6-(dimethylallyl)adenosine (ms(2)i(6)A) at position 37 in tRNAs that read codons beginning with uridine. This Nitratidesulfovibrio vulgaris (strain DP4) (Desulfovibrio vulgaris) protein is tRNA-2-methylthio-N(6)-dimethylallyladenosine synthase.